The sequence spans 179 residues: Pyridoxal 5'-phosphate synthase subunit PdxT (179 aa).

48-50 (GES) lines the L-glutamine pocket. The active-site Nucleophile is cysteine 79. Residues arginine 101 and 127–128 (IR) each bind L-glutamine. Catalysis depends on charge relay system residues histidine 163 and glutamate 165.

The protein belongs to the glutaminase PdxT/SNO family. In terms of assembly, in the presence of PdxS, forms a dodecamer of heterodimers. Only shows activity in the heterodimer.

It carries out the reaction aldehydo-D-ribose 5-phosphate + D-glyceraldehyde 3-phosphate + L-glutamine = pyridoxal 5'-phosphate + L-glutamate + phosphate + 3 H2O + H(+). The catalysed reaction is L-glutamine + H2O = L-glutamate + NH4(+). The protein operates within cofactor biosynthesis; pyridoxal 5'-phosphate biosynthesis. Catalyzes the hydrolysis of glutamine to glutamate and ammonia as part of the biosynthesis of pyridoxal 5'-phosphate. The resulting ammonia molecule is channeled to the active site of PdxS. This chain is Pyridoxal 5'-phosphate synthase subunit PdxT, found in Francisella tularensis subsp. holarctica (strain FTNF002-00 / FTA).